A 356-amino-acid polypeptide reads, in one-letter code: MTRLTLALDVMGGDFGPSVTVPAALQALNSNSQLTLLLVGNPDAITPLLAKADSEQRSRLQIIPAQSVIASDARPSQAIRASRGSSMRMALELVKEGRAQACVSAGNTGALMGLAKLLLKPLEGIERPALVTVLPHQQKGKTVVLDLGANVDCDSTMLVQFAIMGSVLAEEVVEIPNPRVALLNIGEEEVKGLDSIRDASAVLKTIPSINYIGYLEANELLTGKTDVLVCDGFTGNVTLKTMEGVVRMFLSLLKSQGEGKKRSWWLLLLKRWLQKSLTRRFSHLNPDQYNGACLLGLRGTVIKSHGAANQRAFAVAIEQAVQAVQRQVPQRIAARLESVYPAGFELLDGGKSGTLR.

Belongs to the PlsX family. Homodimer. Probably interacts with PlsY.

It is found in the cytoplasm. The enzyme catalyses a fatty acyl-[ACP] + phosphate = an acyl phosphate + holo-[ACP]. It functions in the pathway lipid metabolism; phospholipid metabolism. Its function is as follows. Catalyzes the reversible formation of acyl-phosphate (acyl-PO(4)) from acyl-[acyl-carrier-protein] (acyl-ACP). This enzyme utilizes acyl-ACP as fatty acyl donor, but not acyl-CoA. The sequence is that of Phosphate acyltransferase from Shigella boydii serotype 4 (strain Sb227).